Consider the following 189-residue polypeptide: ATP synthase subunit b (189 aa).

Residues 25-45 form a helical membrane-spanning segment; the sequence is LPVWPEVVIGLICFGIVFFVF.

It belongs to the ATPase B chain family. In terms of assembly, F-type ATPases have 2 components, F(1) - the catalytic core - and F(0) - the membrane proton channel. F(1) has five subunits: alpha(3), beta(3), gamma(1), delta(1), epsilon(1). F(0) has three main subunits: a(1), b(2) and c(10-14). The alpha and beta chains form an alternating ring which encloses part of the gamma chain. F(1) is attached to F(0) by a central stalk formed by the gamma and epsilon chains, while a peripheral stalk is formed by the delta and b chains.

It is found in the cell membrane. F(1)F(0) ATP synthase produces ATP from ADP in the presence of a proton or sodium gradient. F-type ATPases consist of two structural domains, F(1) containing the extramembraneous catalytic core and F(0) containing the membrane proton channel, linked together by a central stalk and a peripheral stalk. During catalysis, ATP synthesis in the catalytic domain of F(1) is coupled via a rotary mechanism of the central stalk subunits to proton translocation. In terms of biological role, component of the F(0) channel, it forms part of the peripheral stalk, linking F(1) to F(0). In Streptomyces griseus subsp. griseus (strain JCM 4626 / CBS 651.72 / NBRC 13350 / KCC S-0626 / ISP 5235), this protein is ATP synthase subunit b.